Here is a 92-residue protein sequence, read N- to C-terminus: Small ribosomal subunit protein uS19 (92 aa).

The protein belongs to the universal ribosomal protein uS19 family.

Protein S19 forms a complex with S13 that binds strongly to the 16S ribosomal RNA. The protein is Small ribosomal subunit protein uS19 (rpsS) of Halalkalibacterium halodurans (strain ATCC BAA-125 / DSM 18197 / FERM 7344 / JCM 9153 / C-125) (Bacillus halodurans).